Consider the following 464-residue polypeptide: 3-isopropylmalate dehydratase large subunit (464 aa).

Residues cysteine 337, cysteine 397, and cysteine 400 each contribute to the [4Fe-4S] cluster site.

This sequence belongs to the aconitase/IPM isomerase family. LeuC type 1 subfamily. As to quaternary structure, heterodimer of LeuC and LeuD. [4Fe-4S] cluster is required as a cofactor.

It catalyses the reaction (2R,3S)-3-isopropylmalate = (2S)-2-isopropylmalate. The protein operates within amino-acid biosynthesis; L-leucine biosynthesis; L-leucine from 3-methyl-2-oxobutanoate: step 2/4. Its function is as follows. Catalyzes the isomerization between 2-isopropylmalate and 3-isopropylmalate, via the formation of 2-isopropylmaleate. The sequence is that of 3-isopropylmalate dehydratase large subunit from Bacillus cereus (strain AH187).